The chain runs to 429 residues: Fez family zinc finger protein 1 (429 aa).

The Engrailed homology 1 repressor signature appears at 29–44 (PLAFSIERIMARTPEP). 6 C2H2-type zinc fingers span residues 247–269 (FTCE…MPVH), 275–297 (FVCK…KIIH), 303–325 (HKCN…TRIH), 331–353 (FICE…KLTH), 359–381 (FKCN…MHTH), and 387–410 (FTCP…RKLH). The segment at 409-429 (LHDISPGPHSPPTPTGNTEGQ) is disordered.

It belongs to the krueppel C2H2-type zinc-finger protein family.

The protein resides in the nucleus. Transcription repressor. Involved in the development of the forebrain region. The protein is Fez family zinc finger protein 1 (fezf1) of Danio rerio (Zebrafish).